The following is a 282-amino-acid chain: (4-alkanoyl-5-oxo-2,5-dihydrofuran-3-yl)methyl phosphate reductase (282 aa).

Gly-6–Val-11 is a binding site for NADP(+).

The protein belongs to the NmrA-type oxidoreductase family.

The enzyme catalyses a [(3S,4R)-4-alkanoyl-5-oxooxolan-3-yl]methyl phosphate + NADP(+) = a (4-alkanoyl-5-oxo-2,5-dihydrofuran-3-yl)methyl phosphate + NADPH + H(+). It carries out the reaction [(3S,4R)-4-(6-methylheptanoyl)-5-oxooxolan-3-yl]methyl phosphate + NADP(+) = [4-(6-methylheptanoyl)-5-oxo-2H-furan-3-yl]methyl phosphate + NADPH + H(+). Functionally, involved in the biosynthesis of A factor (2-isocapryloyl-3R-hydroxymethyl-gamma-butyrolactone), a gamma-butyrolactone autoregulator that triggers secondary metabolism and morphogenesis in Streptomyces. Catalyzes the reduction of the butenolide phosphate produced by nonenzymatic intramolecular condensation of the 8-methyl-3-oxononanoyl-DHAP ester. In Streptomyces griseus subsp. griseus (strain JCM 4626 / CBS 651.72 / NBRC 13350 / KCC S-0626 / ISP 5235), this protein is (4-alkanoyl-5-oxo-2,5-dihydrofuran-3-yl)methyl phosphate reductase.